The primary structure comprises 359 residues: F-box/kelch-repeat protein At1g15670 (359 aa).

The F-box domain occupies 2-49; that stretch reads ELIPDLPETVAYECLLRSSYKQFPLMASVCKLWQREISLSDFFRHRKA. Kelch repeat units follow at residues 119–167, 170–217, 219–269, 271–310, and 313–358; these read DLVV…ASDS, NVFV…FHAG, FHVI…CAAG, NGDLYACCRRDLMMMKDDTWYKVGNLPADVCNVSYVAIRR, and NLVV…CFLE.

This is F-box/kelch-repeat protein At1g15670 from Arabidopsis thaliana (Mouse-ear cress).